The chain runs to 714 residues: Polyribonucleotide nucleotidyltransferase (714 aa).

Residues D489 and D495 each contribute to the Mg(2+) site. A KH domain is found at 556 to 615; sequence PKIDTIKIDVDKIKVVIGKGGETIDKIIAETGVKIDIDEEGNVSIYSSDQDAINRAKEII. The S1 motif domain occupies 625 to 693; it reads GEVYHAKVVR…DKGRIDASMK (69 aa). The segment at 691–714 is disordered; that stretch reads SMKALVPRPPKPEKSEAKKEGKHD. Residues 700 to 714 are compositionally biased toward basic and acidic residues; it reads PKPEKSEAKKEGKHD.

This sequence belongs to the polyribonucleotide nucleotidyltransferase family. It depends on Mg(2+) as a cofactor.

The protein resides in the cytoplasm. It catalyses the reaction RNA(n+1) + phosphate = RNA(n) + a ribonucleoside 5'-diphosphate. In terms of biological role, involved in mRNA degradation. Catalyzes the phosphorolysis of single-stranded polyribonucleotides processively in the 3'- to 5'-direction. The chain is Polyribonucleotide nucleotidyltransferase from Streptococcus equi subsp. zooepidemicus (strain H70).